Consider the following 294-residue polypeptide: Cytidine deaminase (294 aa).

CMP/dCMP-type deaminase domains are found at residues 48-168 (DEDA…FGPK) and 186-294 (LTGD…VLLA). 89-91 (NME) contributes to the substrate binding site. A Zn(2+)-binding site is contributed by His102. Glu104 functions as the Proton donor in the catalytic mechanism. 2 residues coordinate Zn(2+): Cys129 and Cys132.

The protein belongs to the cytidine and deoxycytidylate deaminase family. As to quaternary structure, homodimer. Zn(2+) is required as a cofactor.

It catalyses the reaction cytidine + H2O + H(+) = uridine + NH4(+). It carries out the reaction 2'-deoxycytidine + H2O + H(+) = 2'-deoxyuridine + NH4(+). Functionally, this enzyme scavenges exogenous and endogenous cytidine and 2'-deoxycytidine for UMP synthesis. The chain is Cytidine deaminase from Escherichia coli (strain K12).